The following is a 132-amino-acid chain: Small ribosomal subunit protein uS11c (132 aa).

This sequence belongs to the universal ribosomal protein uS11 family. Part of the 30S ribosomal subunit.

It localises to the plastid. The protein resides in the chloroplast. This Gnetum parvifolium (Small-leaved jointfir) protein is Small ribosomal subunit protein uS11c.